A 297-amino-acid polypeptide reads, in one-letter code: Phosphatidylglycerol--prolipoprotein diacylglyceryl transferase (297 aa).

The next 4 helical transmembrane spans lie at 20 to 40, 57 to 77, 105 to 125, and 133 to 153; these read FITI…GLFV, EILP…YVIF, AVWE…ISII, and INLK…QSIG. R154 serves as a coordination point for a 1,2-diacyl-sn-glycero-3-phospho-(1'-sn-glycerol). Helical transmembrane passes span 193 to 213, 225 to 245, and 266 to 286; these read PTFL…IIIF, GFIS…IEGL, and AQFI…FLRL.

The protein belongs to the Lgt family.

The protein localises to the cell inner membrane. It carries out the reaction L-cysteinyl-[prolipoprotein] + a 1,2-diacyl-sn-glycero-3-phospho-(1'-sn-glycerol) = an S-1,2-diacyl-sn-glyceryl-L-cysteinyl-[prolipoprotein] + sn-glycerol 1-phosphate + H(+). It functions in the pathway protein modification; lipoprotein biosynthesis (diacylglyceryl transfer). Its function is as follows. Catalyzes the transfer of the diacylglyceryl group from phosphatidylglycerol to the sulfhydryl group of the N-terminal cysteine of a prolipoprotein, the first step in the formation of mature lipoproteins. In Prochlorococcus marinus (strain MIT 9215), this protein is Phosphatidylglycerol--prolipoprotein diacylglyceryl transferase.